A 360-amino-acid chain; its full sequence is sn-glycerol-3-phosphate import ATP-binding protein UgpC (360 aa).

The ABC transporter domain occupies 4–235; the sequence is LSLKGVRKSY…PATTFVASFI (232 aa). 37–44 lines the ATP pocket; it reads GPSGCGKS.

The protein belongs to the ABC transporter superfamily. sn-glycerol-3-phosphate importer (TC 3.A.1.1.3) family. In terms of assembly, the complex is composed of two ATP-binding proteins (UgpC), two transmembrane proteins (UgpA and UgpE) and a solute-binding protein (UgpB).

Its subcellular location is the cell inner membrane. It carries out the reaction sn-glycerol 3-phosphate(out) + ATP + H2O = sn-glycerol 3-phosphate(in) + ADP + phosphate + H(+). Functionally, part of the ABC transporter complex UgpBAEC involved in sn-glycerol-3-phosphate (G3P) import. Responsible for energy coupling to the transport system. The protein is sn-glycerol-3-phosphate import ATP-binding protein UgpC of Burkholderia thailandensis (strain ATCC 700388 / DSM 13276 / CCUG 48851 / CIP 106301 / E264).